The chain runs to 205 residues: Holliday junction branch migration complex subunit RuvA (205 aa).

The interval 1 to 64 is domain I; it reads MIGRLRGVLI…EDAQLLYGFI (64 aa). The domain II stretch occupies residues 65–143; the sequence is TKQERSLFRL…SLMEASVGSE (79 aa). The tract at residues 144–156 is flexible linker; that stretch reads REFVLQSNYSPAP. The segment at 157–205 is domain III; the sequence is TVNSAEEDAISALISLGYKPPQASKAVSAAYKEGMDSETLIKAALKSML.

Belongs to the RuvA family. Homotetramer. Forms an RuvA(8)-RuvB(12)-Holliday junction (HJ) complex. HJ DNA is sandwiched between 2 RuvA tetramers; dsDNA enters through RuvA and exits via RuvB. An RuvB hexamer assembles on each DNA strand where it exits the tetramer. Each RuvB hexamer is contacted by two RuvA subunits (via domain III) on 2 adjacent RuvB subunits; this complex drives branch migration. In the full resolvosome a probable DNA-RuvA(4)-RuvB(12)-RuvC(2) complex forms which resolves the HJ.

Its subcellular location is the cytoplasm. Functionally, the RuvA-RuvB-RuvC complex processes Holliday junction (HJ) DNA during genetic recombination and DNA repair, while the RuvA-RuvB complex plays an important role in the rescue of blocked DNA replication forks via replication fork reversal (RFR). RuvA specifically binds to HJ cruciform DNA, conferring on it an open structure. The RuvB hexamer acts as an ATP-dependent pump, pulling dsDNA into and through the RuvAB complex. HJ branch migration allows RuvC to scan DNA until it finds its consensus sequence, where it cleaves and resolves the cruciform DNA. The polypeptide is Holliday junction branch migration complex subunit RuvA (Shewanella sp. (strain MR-7)).